We begin with the raw amino-acid sequence, 218 residues long: Protein P9 (218 aa).

It is found in the virion membrane. This chain is Protein P9 (IX), found in Pseudoalteromonas espejiana (Bacteriophage PM2).